Here is a 325-residue protein sequence, read N- to C-terminus: MIVVGIDHGTSGITACVMENKTVKSVFKMKRTEINEKSFLKELEKQVNLNDIDLIGVCYSMGDGIDKITDIKRVENRGVINLEGIGKKIGGGTKVYDEIKSSNIPAIVIPGLHNGVKSMDKRFNALFSHIASPEKISICYNAYKTFGFENFILSDISSNTVTLLIKDGKIFGGFDACVGAVGILHGPIDLELIRNIDADKITANEAFSKAGVVKVTDSYKGVEDTKFEIMNNYDKDEKCKLAVDSLVLSVSMEINSLMFLTPDKNVILAGSIGTWENPNVSKMIKENIDGNVLVLNRESGAIGSAMIAEDILNGKKEILGIPVDF.

This sequence belongs to the UPF0285 family.

The sequence is that of UPF0285 protein MMP0642 from Methanococcus maripaludis (strain DSM 14266 / JCM 13030 / NBRC 101832 / S2 / LL).